The primary structure comprises 341 residues: Arfaptin-2 (341 aa).

A disordered region spans residues 46–84 (NETSIVSGGYGGSGDGLIPTGSGRHPSHSTSPSGPGDEV). The segment covering 65-81 (TGSGRHPSHSTSPSGPG) has biased composition (low complexity). At S72 the chain carries Phosphoserine. The region spanning 121–321 (TVDLELELQI…NQKQLEQTLQ (201 aa)) is the AH domain.

In terms of assembly, forms homodimers or heterodimers with ARFIP1. Interacts with RAC1. Specifically binds to GTP-bound ARF1 and ARF6, but binds to RAC1.GTP and RAC1.GDP with similar affinities. Interacts with ARL1. Interacts (via N-terminus) with IKBKB and IKBKG; these interactions inhibit activation of NF-kappa-B.

Its subcellular location is the golgi apparatus. The protein resides in the trans-Golgi network membrane. Functionally, plays a role in constitutive metalloproteinase (MMP) secretion from the trans Golgi network. May have important functions during vesicle biogenesis at certain cargo subdomains, which could be predominantly utilized by secreted MMPs, such as MMP7 and MMP2. Also involved in autophagy by regulating the starvation-dependent trafficking of ATG9A vesicles which deliver the phosphatidylinositol 4-kinase beta (PI4KB) to the autophagosome initiation site. Involved in phagophore growth during mitophagy by regulating ATG9A trafficking to mitochondria. In addition, plays a role in NF-kappa-B inhibition by interacting with IKBKB and IKBKG. This Mus musculus (Mouse) protein is Arfaptin-2.